A 451-amino-acid polypeptide reads, in one-letter code: Target of rapamycin complex 1 subunit tco89 (451 aa).

The disordered stretch occupies residues 1 to 35 (MERPSLSRRTSSSTVSTDGEGVYSRSTKERKRNFI). Positions 7–17 (SRRTSSSTVST) are enriched in low complexity. A Phosphoserine modification is found at serine 70. Disordered stretches follow at residues 122 to 164 (WDDA…PVTR), 176 to 264 (INSN…GNSL), and 362 to 437 (NQNF…DTDY). Residues 129–162 (NDSTAGNLDSDSALPTPSVTTNEAADSSRASSPV) are compositionally biased toward polar residues. Residues 203 to 215 (DDSAADASTTKSS) show a composition bias toward low complexity. 3 stretches are compositionally biased toward polar residues: residues 228–242 (HSNNREVTQATNQPK), 362–376 (NQNFDSQNAFNTSAA), and 407–417 (QSASLNASMSA). Positions 419 to 430 (SHARQRSIHVPK) are enriched in basic residues.

It belongs to the TORC subunit TCO89 family. As to quaternary structure, the target of rapamycin complex 1 (TORC1) is composed of at least mip1, pop3/wat1, tco89, toc1 and tor2. Either Thr-10, Ser-11, Ser-12, Ser-13 or Thr-14 and Ser-214 or Ser-215 and Ser-247 or Ser-249 are phosphorylated as well.

It is found in the cytoplasm. In terms of biological role, component of TORC1, which regulates multiple cellular processes to control cell growth in response to environmental signals. Tor2 is essential for growth. Nutrient limitation and environmental stress signals cause inactivation of TORC1. Active TORC1 positively controls cell growth and ribosome biogenesis by regulating ribosomal protein gene expression. TORC1 negatively controls G1 cell-cycle arrest, sexual development and amino acid uptake. Represses mating, meiosis and sporulation efficiency by interfering with the functions of the transcription factor ste11 and the meiosis-promoting RNA-binding protein mei2. The sequence is that of Target of rapamycin complex 1 subunit tco89 from Schizosaccharomyces pombe (strain 972 / ATCC 24843) (Fission yeast).